Reading from the N-terminus, the 423-residue chain is Keratin, type I cytoskeletal 18 (423 aa).

Ser2 bears the N-acetylserine mark. The tract at residues 2–71 (SFTTRSTTFS…GLAGMGGIQT (70 aa)) is head. Phosphoserine occurs at positions 7, 11, 16, and 19. Phosphoserine; alternate occurs at positions 31 and 32. O-linked (GlcNAc) serine; alternate glycans are attached at residues Ser31 and Ser32. Ser35 is modified (phosphoserine). The residue at position 37 (Tyr37) is a Phosphotyrosine. Ser43 is subject to Phosphoserine. An Omega-N-methylarginine modification is found at Arg46. Ser50 is subject to Phosphoserine; alternate. Ser50 carries an O-linked (GlcNAc) serine; alternate glycan. Position 52 is a phosphoserine; by MAPKAPK2 and MAPKAPK3 (Ser52). Ser57 and Ser60 each carry phosphoserine. Positions 62 to 366 (GLAGMGGIQT…EALLNIKVKL (305 aa)) are necessary for interaction with PNN. The interval 69-121 (IQTEKETMQDLNDRLASYLDKVKSLETENRRLESKIREHLEKKGPQGVRDWGH) is interaction with TRADD. Residues 72 to 107 (EKETMQDLNDRLASYLDKVKSLETENRRLESKIREH) form a coil 1A region. The region spanning 72–384 (EKETMQDLND…RLLEDGEDFS (313 aa)) is the IF rod domain. Residue Lys73 forms a Glycyl lysine isopeptide (Lys-Gly) (interchain with G-Cter in SUMO2) linkage. 2 positions are modified to phosphoserine: Ser85 and Ser92. The tract at residues 108 to 125 (LEKKGPQGVRDWGHYFKI) is linker 1. Residue Lys124 is modified to N6-acetyllysine. Residues 126–217 (IEDLRAQIFA…KNHEEEVQGL (92 aa)) are coil 1B. Ser137 and Ser170 each carry phosphoserine. A linker 12 region spans residues 218-241 (EAQIASSGLTVEVDAPKSQDLSKI). Residues 236–384 (QDLSKIMADI…RLLEDGEDFS (149 aa)) are interaction with DNAJB6. Lys240 is covalently cross-linked (Glycyl lysine isopeptide (Lys-Gly) (interchain with G-Cter in SUMO2)). Residues 242 to 380 (MADIRAQYEA…ATYRRLLEDG (139 aa)) are coil 2. Residue Thr295 is modified to Phosphothreonine. Ser316 carries the post-translational modification Phosphoserine. Glycyl lysine isopeptide (Lys-Gly) (interchain with G-Cter in SUMO2) cross-links involve residues Lys363 and Lys365. The tract at residues 381–423 (EDFSLNDALDSSNSMQTVQKTTTRKIVDGRVVSETNDTRVLRH) is tail. 4 positions are modified to phosphoserine: Ser384, Ser391, Ser392, and Ser394. Position 397 is a phosphothreonine (Thr397).

This sequence belongs to the intermediate filament family. Heterotetramer of two type I and two type II keratins. KRT18 associates with KRT8. Interacts with PLEC isoform 1C, when in a heterodimer with KRT8. Interacts with PNN and mutated CFTR. Interacts with YWHAE, YWHAH and YWHAZ only when phosphorylated. Interacts with the thrombin-antithrombin complex. Interacts with DNAJB6, TCHP and TRADD. Interacts with FAM83H. Interacts with EPPK1. Interacts with PKP1 and PKP2. In terms of processing, phosphorylation increases by IL-6. Proteolytically cleaved by caspases during epithelial cell apoptosis. Cleavage occurs at Asp-231 by either caspase-3, caspas-6 or caspase-7. Post-translationally, O-GlcNAcylation increases solubility, and decreases stability by inducing proteasomal degradation. As to expression, expressed in endoderm, intestinal epithelial cells and in most extraembryonic tissues.

Its subcellular location is the nucleus matrix. The protein resides in the cytoplasm. It is found in the perinuclear region. The protein localises to the nucleus. It localises to the nucleolus. Its function is as follows. When phosphorylated, plays a role in filament reorganization. Involved in the delivery of mutated CFTR to the plasma membrane. Involved in the uptake of thrombin-antithrombin complexes by hepatic cells. Together with KRT8, is involved in interleukin-6 (IL-6)-mediated barrier protection. The sequence is that of Keratin, type I cytoskeletal 18 (Krt18) from Mus musculus (Mouse).